Here is a 629-residue protein sequence, read N- to C-terminus: UvrABC system protein C (629 aa).

Positions threonine 26–valine 105 constitute a GIY-YIG domain. Positions serine 219–tyrosine 254 constitute a UVR domain.

This sequence belongs to the UvrC family. As to quaternary structure, interacts with UvrB in an incision complex.

It is found in the cytoplasm. The UvrABC repair system catalyzes the recognition and processing of DNA lesions. UvrC both incises the 5' and 3' sides of the lesion. The N-terminal half is responsible for the 3' incision and the C-terminal half is responsible for the 5' incision. This Chlorobium chlorochromatii (strain CaD3) protein is UvrABC system protein C.